The following is a 42-amino-acid chain: Osteocalcin (42 aa).

The Gla domain maps to 1 to 40 (YLDHGLGAPAPYVDPLEPKREVDELADQMGFQEAYRRFYG). A 4-hydroxyproline modification is found at proline 9. 3 residues coordinate Ca(2+): glutamate 17, glutamate 21, and aspartate 23. 4-carboxyglutamate occurs at positions 17 and 21.

This sequence belongs to the osteocalcin/matrix Gla protein family. Post-translationally, gamma-carboxyglutamic acid residues are formed by vitamin K dependent carboxylation. These residues are essential for the binding of calcium.

The protein resides in the secreted. Functionally, the carboxylated form is one of the main organic components of the bone matrix, which constitutes 1-2% of the total bone protein: it acts as a negative regulator of bone formation and is required to limit bone formation without impairing bone resorption or mineralization. The carboxylated form binds strongly to apatite and calcium. Its function is as follows. The uncarboxylated form acts as a hormone secreted by osteoblasts, which regulates different cellular processes, such as energy metabolism, male fertility and brain development. Regulates of energy metabolism by acting as a hormone favoring pancreatic beta-cell proliferation, insulin secretion and sensitivity and energy expenditure. Uncarboxylated osteocalcin hormone also promotes testosterone production in the testes: acts as a ligand for G protein-coupled receptor GPRC6A at the surface of Leydig cells, initiating a signaling response that promotes the expression of enzymes required for testosterone synthesis in a CREB-dependent manner. Also acts as a regulator of brain development: osteocalcin hormone crosses the blood-brain barrier and acts as a ligand for GPR158 on neurons, initiating a signaling response that prevents neuronal apoptosis in the hippocampus, favors the synthesis of all monoamine neurotransmitters and inhibits that of gamma-aminobutyric acid (GABA). Osteocalcin also crosses the placenta during pregnancy and maternal osteocalcin is required for fetal brain development. This is Osteocalcin from Camelops hesternus (Western camel).